The following is a 167-amino-acid chain: Transmembrane protein 229B (167 aa).

Topologically, residues 1–14 (MASAEPLTALSRWY) are cytoplasmic. A helical membrane pass occupies residues 15 to 35 (LYAIHGYFCEVMFTAAWEFVV). Residues 36-40 (NFNWK) lie on the Extracellular side of the membrane. A helical membrane pass occupies residues 41 to 61 (FPGVTSVWALFIYGTSILIVE). The Cytoplasmic segment spans residues 62-73 (RMYLRLRGRCPL). A helical transmembrane segment spans residues 74-94 (LLRCLIYTLWTYLWEFTTGFI). Topologically, residues 95–111 (LRQFNACPWDYSQFDFD) are extracellular. Residues 112-132 (FMGLITLEYAVPWFCGALLVE) form a helical membrane-spanning segment. The Cytoplasmic portion of the chain corresponds to 133-167 (QFVIRNTLRLRFDKDAEPGEPSGALALANGHVKTD).

The protein belongs to the TMEM229 family.

Its subcellular location is the membrane. The protein is Transmembrane protein 229B (TMEM229B) of Bos taurus (Bovine).